Here is a 311-residue protein sequence, read N- to C-terminus: tRNA-cytidine(32) 2-sulfurtransferase (311 aa).

Positions 47 to 52 (SGGKDS) match the PP-loop motif motif. Cys122, Cys125, and Cys213 together coordinate [4Fe-4S] cluster.

The protein belongs to the TtcA family. In terms of assembly, homodimer. It depends on Mg(2+) as a cofactor. Requires [4Fe-4S] cluster as cofactor.

Its subcellular location is the cytoplasm. The enzyme catalyses cytidine(32) in tRNA + S-sulfanyl-L-cysteinyl-[cysteine desulfurase] + AH2 + ATP = 2-thiocytidine(32) in tRNA + L-cysteinyl-[cysteine desulfurase] + A + AMP + diphosphate + H(+). The protein operates within tRNA modification. In terms of biological role, catalyzes the ATP-dependent 2-thiolation of cytidine in position 32 of tRNA, to form 2-thiocytidine (s(2)C32). The sulfur atoms are provided by the cysteine/cysteine desulfurase (IscS) system. The sequence is that of tRNA-cytidine(32) 2-sulfurtransferase from Enterobacter sp. (strain 638).